Here is a 513-residue protein sequence, read N- to C-terminus: Activin receptor type-2A (513 aa).

A signal peptide spans 1-19; that stretch reads MGAAAKLAFAVFLISCSSG. Topologically, residues 20 to 135 are extracellular; it reads AILGRSETQE…TSNPVTPKPP (116 aa). Intrachain disulfides connect Cys-30–Cys-60, Cys-50–Cys-78, Cys-85–Cys-104, Cys-91–Cys-103, and Cys-105–Cys-110. N-linked (GlcNAc...) asparagine glycosylation is found at Asn-43 and Asn-66. Residues 136-161 traverse the membrane as a helical segment; it reads YYNILLYSLVPLMLIAGIVICAFWVY. At 162–513 the chain is on the cytoplasmic side; that stretch reads RHHKMAYPPV…VDFPPKESSL (352 aa). The region spanning 192–485 is the Protein kinase domain; the sequence is LQLLEVKARG…GERITQMQRL (294 aa). Residues 198 to 206 and Lys-219 each bind ATP; that span reads KARGRFGCV. The Proton acceptor role is filled by Asp-322.

Belongs to the protein kinase superfamily. TKL Ser/Thr protein kinase family. TGFB receptor subfamily. As to quaternary structure, part of a complex consisting of MAGI2/ARIP1, ACVR2A, ACVR1B and SMAD3. Interacts with MAGI2/ARIP1. Interacts with type I receptor ACVR1. Interacts with BMP7. Interacts with TSC22D1/TSC-22. Interacts with activin A/INHBA. Requires Mg(2+) as cofactor. Mn(2+) is required as a cofactor.

It localises to the cell membrane. It catalyses the reaction L-threonyl-[receptor-protein] + ATP = O-phospho-L-threonyl-[receptor-protein] + ADP + H(+). The catalysed reaction is L-seryl-[receptor-protein] + ATP = O-phospho-L-seryl-[receptor-protein] + ADP + H(+). In terms of biological role, on ligand binding, forms a receptor complex consisting of two type II and two type I transmembrane serine/threonine kinases. Type II receptors phosphorylate and activate type I receptors which autophosphorylate, then bind and activate SMAD transcriptional regulators. Receptor for activin A, activin B and inhibin A. Mediates induction of adipogenesis by GDF6. This chain is Activin receptor type-2A (ACVR2A), found in Bos taurus (Bovine).